Consider the following 205-residue polypeptide: Thiamine-phosphate synthase (205 aa).

4-amino-2-methyl-5-(diphosphooxymethyl)pyrimidine-binding positions include 36–40 (QYRRK) and Asp-68. Residues Asp-69 and Asp-88 each coordinate Mg(2+). A 4-amino-2-methyl-5-(diphosphooxymethyl)pyrimidine-binding site is contributed by Ser-106. 132 to 134 (SPT) contributes to the 2-[(2R,5Z)-2-carboxy-4-methylthiazol-5(2H)-ylidene]ethyl phosphate binding site. Lys-135 is a binding site for 4-amino-2-methyl-5-(diphosphooxymethyl)pyrimidine. 2-[(2R,5Z)-2-carboxy-4-methylthiazol-5(2H)-ylidene]ethyl phosphate contacts are provided by residues Gly-162 and 182–183 (IS).

This sequence belongs to the thiamine-phosphate synthase family. Requires Mg(2+) as cofactor.

The catalysed reaction is 2-[(2R,5Z)-2-carboxy-4-methylthiazol-5(2H)-ylidene]ethyl phosphate + 4-amino-2-methyl-5-(diphosphooxymethyl)pyrimidine + 2 H(+) = thiamine phosphate + CO2 + diphosphate. It carries out the reaction 2-(2-carboxy-4-methylthiazol-5-yl)ethyl phosphate + 4-amino-2-methyl-5-(diphosphooxymethyl)pyrimidine + 2 H(+) = thiamine phosphate + CO2 + diphosphate. The enzyme catalyses 4-methyl-5-(2-phosphooxyethyl)-thiazole + 4-amino-2-methyl-5-(diphosphooxymethyl)pyrimidine + H(+) = thiamine phosphate + diphosphate. Its pathway is cofactor biosynthesis; thiamine diphosphate biosynthesis; thiamine phosphate from 4-amino-2-methyl-5-diphosphomethylpyrimidine and 4-methyl-5-(2-phosphoethyl)-thiazole: step 1/1. In terms of biological role, condenses 4-methyl-5-(beta-hydroxyethyl)thiazole monophosphate (THZ-P) and 2-methyl-4-amino-5-hydroxymethyl pyrimidine pyrophosphate (HMP-PP) to form thiamine monophosphate (TMP). The sequence is that of Thiamine-phosphate synthase from Caldivirga maquilingensis (strain ATCC 700844 / DSM 13496 / JCM 10307 / IC-167).